The primary structure comprises 181 residues: MIDVVLLALALSMDAFAVSIGLGAKNKASPVVLGLKAALYFGVFQALMPLIGYLGGKGMLGWLASFAPWVAAGLLALIAAKMIYESFAEGIEEDISQLTHRVLLLLAIATSIDALAAGFALTVLPVAPLVSCALIGVITAIFSFAGVFIGKRAGTWLESKAELAGGLVLLLIALKIIAVAV.

6 helical membrane-spanning segments follow: residues 4–24, 31–51, 59–79, 102–122, 129–149, and 161–181; these read VVLL…GLGA, VVLG…MPLI, MLGW…ALIA, VLLL…FALT, LVSC…GVFI, and AELA…AVAV.

The protein belongs to the MntP (TC 9.B.29) family.

It is found in the cell inner membrane. Probably functions as a manganese efflux pump. The polypeptide is Putative manganese efflux pump MntP (Saccharophagus degradans (strain 2-40 / ATCC 43961 / DSM 17024)).